The following is a 1871-amino-acid chain: Protein RRP5 homolog (1871 aa).

The interval 1–62 (MANLEESFPR…KTKKLKIEKR (62 aa)) is disordered. Alanine 2 carries the post-translational modification N-acetylalanine. At serine 7 the chain carries Phosphoserine. Basic residues predominate over residues 43–59 (KRKKSQKGPAKTKKLKI). S1 motif domains follow at residues 83–171 (GMRI…LSLN), 187–258 (GMLL…LSVG), 281–346 (GLVV…LSLR), and 365–436 (GAVL…LSLR). Position 438 is a phosphoserine (serine 438). S1 motif domains follow at residues 453–522 (GAVV…MTLK), 542–611 (GLQT…LSFK), 636–707 (GQLV…LCRK), and 729–798 (GMLL…LSLR). Positions 998–1018 (AAKRTMRPTQKDSETVDEDEE) are disordered. A Glycyl lysine isopeptide (Lys-Gly) (interchain with G-Cter in SUMO1) cross-link involves residue lysine 1030. 4 S1 motif domains span residues 1036 to 1109 (GDMV…ISHP), 1149 to 1222 (GQTV…LSLT), 1230 to 1298 (GEVA…LSLR), and 1324 to 1396 (GQLL…LSFL). A phosphoserine mark is found at serine 1360 and serine 1362. Disordered stretches follow at residues 1395 to 1531 (FLPG…APRL) and 1549 to 1586 (ALPPLAESSDSEEDEKPHQATIKKSKKERELEKQKAEK). Residue lysine 1416 forms a Glycyl lysine isopeptide (Lys-Gly) (interchain with G-Cter in SUMO2) linkage. Composition is skewed to basic and acidic residues over residues 1416 to 1459 (KQEE…EKQQ) and 1469 to 1484 (GGRECRESGSEQERVS). Phosphoserine is present on residues serine 1476, serine 1493, and serine 1498. Over residues 1575–1586 (KERELEKQKAEK) the composition is skewed to basic and acidic residues. 4 HAT repeats span residues 1599 to 1631 (GRQPESADDFDRLVLSSPNSSILWLQYMAFHLQ), 1705 to 1737 (EKFQEAGELYNRMLKRFRQEKAVWIKYGAFLLR), 1775 to 1807 (GDAERAKAIFENTLSTYPKRTDVWSVYIDMTIK), and 1809 to 1844 (GSQKDVRDIFERVIHLSLAPKRMKFFFKRYLDYEKQ).

Interacts with NF-kappa-B p50/NFKB1 and NF-kappa-B p65/RELA.

The protein localises to the nucleus. It localises to the nucleolus. Functionally, essential for the generation of mature 18S rRNA, specifically necessary for cleavages at sites A0, 1 and 2 of the 47S precursor. Directly interacts with U3 snoRNA. In terms of biological role, involved in the biogenesis of rRNA. The protein is Protein RRP5 homolog (PDCD11) of Homo sapiens (Human).